The chain runs to 267 residues: tRNA pseudouridine synthase A (267 aa).

D55 acts as the Nucleophile in catalysis. Y111 contributes to the substrate binding site.

This sequence belongs to the tRNA pseudouridine synthase TruA family.

The enzyme catalyses uridine(38/39/40) in tRNA = pseudouridine(38/39/40) in tRNA. Formation of pseudouridine at positions 38, 39 and 40 in the anticodon stem and loop of transfer RNAs. The chain is tRNA pseudouridine synthase A from Thermococcus onnurineus (strain NA1).